Reading from the N-terminus, the 155-residue chain is 6,7-dimethyl-8-ribityllumazine synthase (155 aa).

5-amino-6-(D-ribitylamino)uracil contacts are provided by residues phenylalanine 22, 56-58 (AFE), and 80-82 (AVI). 85–86 (ST) serves as a coordination point for (2S)-2-hydroxy-3-oxobutyl phosphate. Catalysis depends on histidine 88, which acts as the Proton donor. Phenylalanine 113 is a binding site for 5-amino-6-(D-ribitylamino)uracil. Residue arginine 127 coordinates (2S)-2-hydroxy-3-oxobutyl phosphate.

The protein belongs to the DMRL synthase family.

It carries out the reaction (2S)-2-hydroxy-3-oxobutyl phosphate + 5-amino-6-(D-ribitylamino)uracil = 6,7-dimethyl-8-(1-D-ribityl)lumazine + phosphate + 2 H2O + H(+). It functions in the pathway cofactor biosynthesis; riboflavin biosynthesis; riboflavin from 2-hydroxy-3-oxobutyl phosphate and 5-amino-6-(D-ribitylamino)uracil: step 1/2. In terms of biological role, catalyzes the formation of 6,7-dimethyl-8-ribityllumazine by condensation of 5-amino-6-(D-ribitylamino)uracil with 3,4-dihydroxy-2-butanone 4-phosphate. This is the penultimate step in the biosynthesis of riboflavin. The sequence is that of 6,7-dimethyl-8-ribityllumazine synthase from Bifidobacterium longum subsp. infantis (strain ATCC 15697 / DSM 20088 / JCM 1222 / NCTC 11817 / S12).